Here is a 148-residue protein sequence, read N- to C-terminus: Flavodoxin (148 aa).

Positions 4–145 constitute a Flavodoxin-like domain; it reads VLIVYGSTTG…DVSAWAGRVV (142 aa).

This sequence belongs to the flavodoxin family. Requires FMN as cofactor.

Functionally, low-potential electron donor to a number of redox enzymes. The sequence is that of Flavodoxin from Nitratidesulfovibrio vulgaris (strain DSM 19637 / Miyazaki F) (Desulfovibrio vulgaris).